The chain runs to 159 residues: Ribosomal RNA large subunit methyltransferase H (159 aa).

Residues L76, G108, and 127–132 contribute to the S-adenosyl-L-methionine site; that span reads FSKMTF.

The protein belongs to the RNA methyltransferase RlmH family. Homodimer.

The protein localises to the cytoplasm. The enzyme catalyses pseudouridine(1915) in 23S rRNA + S-adenosyl-L-methionine = N(3)-methylpseudouridine(1915) in 23S rRNA + S-adenosyl-L-homocysteine + H(+). In terms of biological role, specifically methylates the pseudouridine at position 1915 (m3Psi1915) in 23S rRNA. The sequence is that of Ribosomal RNA large subunit methyltransferase H from Shouchella clausii (strain KSM-K16) (Alkalihalobacillus clausii).